The following is a 449-amino-acid chain: POU domain, class 5, transcription factor 1.1 (449 aa).

Disordered stretches follow at residues 79–125 (ENNQ…SPPN) and 170–233 (YPTP…PSES). The segment covering 97-110 (SRIKVKEEVVHETD) has biased composition (basic and acidic residues). Residues 170 to 180 (YPTPANQSPNT) are compositionally biased toward polar residues. Low complexity predominate over residues 187–199 (SSMESSRCSSTNS). Residues 224–233 (DNEEEVPSES) are compositionally biased toward acidic residues. The region spanning 227–301 (EEVPSESEME…FLERWVVEAE (75 aa)) is the POU-specific domain. The homeobox DNA-binding region spans 321 to 380 (KRKRRTNIENIVKGTLESYFMKCPKPGAQEMVQIAKELNMDKDVVRVWFCNRRQKGKRQG).

The protein belongs to the POU transcription factor family. Class-5 subfamily. Interacts with components of the transcription complex that assembles on the vent2-B gene, including vent2 (via C-terminus), smad1 and smad4. Forms a repression complex on the promoters of the gsc and mix2 genes via interactions with the nodal/activin signaling pathway transducers foxh1/fast1, gtf2ird1/wbscr11 and smad2. Forms a repression complex on the promoters of the nodal/nr1 and siamois genes with the maternal factors tcf7l1/tcf3 and vegt. As to expression, highly enriched within the animal half of developing embryos within ectodermal and mesodermal regions. Expressed in the neuroectoderm at the early neurula stage, with expression initially extending to the future hindbrain/midbrain boundary, but later shifting toward the posterior pole where it persists within the tip of the tail in hatching embryos. Expressed at very low levels in the adult kidney.

The protein resides in the nucleus. Its function is as follows. Transcription factor that binds to the octamer motif (5'-ATTTGCAT-3'). Activates transcription when directly bound to the octamer DNA sequence, but can form repression complexes with other proteins at the promoter site to inhibit transcription. Binds to the promoter of the vent2-B gene to activate transcription when in the presence of other BMP signaling factors also bound to the promoter. Inhibits the competence of ectodermal cells to respond to BMP during embryogenesis thereby inhibiting epidermal differentiation and promoting neural induction. Antagonizes the activity of nodal/activin signaling by forming a transcriptional repression complex on the gsc and mix2 gene promoters to inhibit their transcription, and thus maintain the undifferentiated state of embryonic cells to prevent them from differentiating prematurely. Acts maternally to inhibit vegt and beta-catenin-activated gene transcription by forming a transcriptional repression complex on the nodal/nr1 and siamois promoters to inhibit their transcription. The sequence is that of POU domain, class 5, transcription factor 1.1 (pou5f1.1) from Xenopus laevis (African clawed frog).